Here is a 602-residue protein sequence, read N- to C-terminus: Elongation factor 4 (602 aa).

One can recognise a tr-type G domain in the interval S7 to A189. Residues D19 to T24 and N136 to D139 each bind GTP.

The protein belongs to the TRAFAC class translation factor GTPase superfamily. Classic translation factor GTPase family. LepA subfamily.

Its subcellular location is the cell inner membrane. The catalysed reaction is GTP + H2O = GDP + phosphate + H(+). Functionally, required for accurate and efficient protein synthesis under certain stress conditions. May act as a fidelity factor of the translation reaction, by catalyzing a one-codon backward translocation of tRNAs on improperly translocated ribosomes. Back-translocation proceeds from a post-translocation (POST) complex to a pre-translocation (PRE) complex, thus giving elongation factor G a second chance to translocate the tRNAs correctly. Binds to ribosomes in a GTP-dependent manner. This Picosynechococcus sp. (strain ATCC 27264 / PCC 7002 / PR-6) (Agmenellum quadruplicatum) protein is Elongation factor 4.